The primary structure comprises 425 residues: Serine--tRNA ligase (425 aa).

233-235 (TAE) lines the L-serine pocket. 264 to 266 (RRE) is a binding site for ATP. Glu287 is an L-serine binding site. 351–354 (EISS) contributes to the ATP binding site. Ser387 contributes to the L-serine binding site.

Belongs to the class-II aminoacyl-tRNA synthetase family. Type-1 seryl-tRNA synthetase subfamily. Homodimer. The tRNA molecule binds across the dimer.

It is found in the cytoplasm. It catalyses the reaction tRNA(Ser) + L-serine + ATP = L-seryl-tRNA(Ser) + AMP + diphosphate + H(+). It carries out the reaction tRNA(Sec) + L-serine + ATP = L-seryl-tRNA(Sec) + AMP + diphosphate + H(+). It functions in the pathway aminoacyl-tRNA biosynthesis; selenocysteinyl-tRNA(Sec) biosynthesis; L-seryl-tRNA(Sec) from L-serine and tRNA(Sec): step 1/1. In terms of biological role, catalyzes the attachment of serine to tRNA(Ser). Is also able to aminoacylate tRNA(Sec) with serine, to form the misacylated tRNA L-seryl-tRNA(Sec), which will be further converted into selenocysteinyl-tRNA(Sec). The protein is Serine--tRNA ligase of Thermotoga petrophila (strain ATCC BAA-488 / DSM 13995 / JCM 10881 / RKU-1).